Consider the following 473-residue polypeptide: Zinc finger and SCAN domain-containing protein 21 (473 aa).

Residue K27 forms a Glycyl lysine isopeptide (Lys-Gly) (interchain with G-Cter in SUMO2) linkage. Residues 45–127 (RQRFRQFGYH…TLLEDLEREL (83 aa)) enclose the SCAN box domain. Positions 127–167 (LDEPGHQVSTPPNEQKPVWEKISSSGTAKESPSSMQPQPLE) are disordered. Positions 148–165 (ISSSGTAKESPSSMQPQP) are enriched in polar residues. Glycyl lysine isopeptide (Lys-Gly) (interchain with G-Cter in SUMO2) cross-links involve residues K221 and K232. The disordered stretch occupies residues 244-272 (LENEKGTKPPLQEAGSKKGRESVPTKPTP). Over residues 258–272 (GSKKGRESVPTKPTP) the composition is skewed to basic and acidic residues. C2H2-type zinc fingers lie at residues 277–299 (YICA…RRTH), 305–327 (YVCT…YRTH), 333–354 (YDCK…QRMH), 360–382 (YQCK…YRIH), 388–410 (YQCN…QRLH), 416–438 (YKCK…HRIH), and 444–466 (YWCH…QRVH). K349 participates in a covalent cross-link: Glycyl lysine isopeptide (Lys-Gly) (interchain with G-Cter in SUMO2).

The protein belongs to the krueppel C2H2-type zinc-finger protein family.

The protein localises to the nucleus. Its function is as follows. Strong transcriptional activator. Plays an important role in spermatogenesis; essential for the progression of meiotic prophase I in spermatocytes. This is Zinc finger and SCAN domain-containing protein 21 (ZSCAN21) from Pan troglodytes (Chimpanzee).